The following is a 688-amino-acid chain: Glycine--tRNA ligase beta subunit (688 aa).

This sequence belongs to the class-II aminoacyl-tRNA synthetase family. As to quaternary structure, tetramer of two alpha and two beta subunits.

The protein resides in the cytoplasm. It catalyses the reaction tRNA(Gly) + glycine + ATP = glycyl-tRNA(Gly) + AMP + diphosphate. In Listeria monocytogenes serovar 1/2a (strain ATCC BAA-679 / EGD-e), this protein is Glycine--tRNA ligase beta subunit.